A 219-amino-acid polypeptide reads, in one-letter code: UPF0073 inner membrane protein YqfA (219 aa).

Residues 1–23 lie on the Cytoplasmic side of the membrane; the sequence is MVQKPLIKQGYSLAEEIANSVSH. The chain crosses the membrane as a helical span at residues 24-44; sequence GIGLVFGIVGLVLLLVQAVDL. Over 45–53 the chain is Periplasmic; that stretch reads NASATAITS. Residues 54 to 74 form a helical membrane-spanning segment; the sequence is YSLYGGSMILLFLASTLYHAI. Residues 75-90 lie on the Cytoplasmic side of the membrane; that stretch reads PHQRAKMWLKKFDHCA. A helical transmembrane segment spans residues 91–111; that stretch reads IYLLIAGTYTPFLLVGLDSPL. The Periplasmic portion of the chain corresponds to 112-113; it reads AR. The helical transmembrane segment at 114–134 threads the bilayer; that stretch reads GLMIVIWSLALLGILFKLTIA. Residues 135–138 are Cytoplasmic-facing; it reads HRFK. The helical transmembrane segment at 139–159 threads the bilayer; that stretch reads ILSLVTYLAMGWLSLVVIYEM. Topologically, residues 160 to 165 are periplasmic; that stretch reads AVKLAA. Residues 166-186 traverse the membrane as a helical segment; the sequence is GSVTLLAVGGVVYSLGVIFYV. Residues 187–195 are Cytoplasmic-facing; sequence CKRIPYNHA. A helical membrane pass occupies residues 196 to 216; the sequence is IWHGFVLGGSVCHFLAIYLYI. The Periplasmic portion of the chain corresponds to 217–219; sequence GQA.

Belongs to the UPF0073 (Hly-III) family.

It localises to the cell inner membrane. The protein is UPF0073 inner membrane protein YqfA (yqfA) of Escherichia coli O157:H7.